The following is a 192-amino-acid chain: Casparian strip membrane protein 1 (192 aa).

Over M1 to G30 the chain is Cytoplasmic. Residues L31–A51 traverse the membrane as a helical segment. Topologically, residues T52–Q80 are extracellular. The helical transmembrane segment at F81 to V101 threads the bilayer. At V102–R113 the chain is on the cytoplasmic side. Residues L114–A134 form a helical membrane-spanning segment. Topologically, residues A135–G166 are extracellular. A helical membrane pass occupies residues A167 to L187. Residues A188–H192 lie on the Cytoplasmic side of the membrane.

Belongs to the Casparian strip membrane proteins (CASP) family. In terms of assembly, homodimer and heterodimers.

Its subcellular location is the cell membrane. Functionally, regulates membrane-cell wall junctions and localized cell wall deposition. Required for establishment of the Casparian strip membrane domain (CSD) and the subsequent formation of Casparian strips, a cell wall modification of the root endodermis that determines an apoplastic barrier between the intraorganismal apoplasm and the extraorganismal apoplasm and prevents lateral diffusion. The protein is Casparian strip membrane protein 1 of Vigna unguiculata (Cowpea).